Consider the following 322-residue polypeptide: DNA repair and recombination protein RadA (322 aa).

105 to 112 (GMYGSGKT) contacts ATP.

This sequence belongs to the eukaryotic RecA-like protein family.

Functionally, involved in DNA repair and in homologous recombination. Binds and assemble on single-stranded DNA to form a nucleoprotein filament. Hydrolyzes ATP in a ssDNA-dependent manner and promotes DNA strand exchange between homologous DNA molecules. The polypeptide is DNA repair and recombination protein RadA (Methanococcus maripaludis (strain C7 / ATCC BAA-1331)).